The chain runs to 206 residues: Ribosomal RNA small subunit methyltransferase G (206 aa).

Residues glycine 73, leucine 78, 124–125, and arginine 139 each bind S-adenosyl-L-methionine; that span reads VE.

This sequence belongs to the methyltransferase superfamily. RNA methyltransferase RsmG family.

It is found in the cytoplasm. It catalyses the reaction guanosine(527) in 16S rRNA + S-adenosyl-L-methionine = N(7)-methylguanosine(527) in 16S rRNA + S-adenosyl-L-homocysteine. Its function is as follows. Specifically methylates the N7 position of guanine in position 527 of 16S rRNA. This chain is Ribosomal RNA small subunit methyltransferase G, found in Idiomarina loihiensis (strain ATCC BAA-735 / DSM 15497 / L2-TR).